Reading from the N-terminus, the 636-residue chain is Molybdenum cofactor biosynthesis protein 1 (636 aa).

The interval 1 to 383 (MAARPAFGIV…QMKNRPMILI (383 aa)) is molybdenum cofactor biosynthesis protein A. Residues 19–40 (RGCSSGAPVTQPRPGEPSRPTR) form a disordered region. Ser-64 is modified (phosphoserine). One can recognise a Radical SAM core domain in the interval 64 to 279 (SFGRQHSYLR…TIRQRWPGLE (216 aa)). Position 73 (Arg-73) interacts with GTP. The [4Fe-4S] cluster site is built by Cys-80 and Cys-84. Position 86 (Tyr-86) interacts with S-adenosyl-L-methionine. Cys-87 serves as a coordination point for [4Fe-4S] cluster. GTP is bound at residue Arg-123. Residue Gly-127 participates in S-adenosyl-L-methionine binding. Position 154 (Thr-154) interacts with GTP. Residue Ser-178 participates in S-adenosyl-L-methionine binding. Lys-198 is subject to N6-acetyllysine. Residue Lys-215 participates in GTP binding. Met-249 contacts S-adenosyl-L-methionine. [4Fe-4S] cluster-binding residues include Cys-312 and Cys-315. GTP is bound at residue 317-319 (RLR). [4Fe-4S] cluster is bound at residue Cys-329. The molybdenum cofactor biosynthesis protein C stretch occupies residues 414–636 (QCLSDQMASL…GGQRGDFHRA (223 aa)). The interval 444 to 484 (SPQRHYSSYPDPDTHSKCLSTGSQAPDAPSGPGPTSNQLTH) is disordered. Lys-528 bears the N6-acetyllysine mark. Residue Asp-606 is the For molybdenum cofactor biosynthesis protein C activity of the active site.

The protein in the C-terminal section; belongs to the MoaC family. This sequence in the N-terminal section; belongs to the radical SAM superfamily. MoaA family. As to quaternary structure, isoform Mocs1a and isoform Mocs1b probably form a heterooligomer. It depends on [4Fe-4S] cluster as a cofactor.

It catalyses the reaction GTP + AH2 + S-adenosyl-L-methionine = (8S)-3',8-cyclo-7,8-dihydroguanosine 5'-triphosphate + 5'-deoxyadenosine + L-methionine + A + H(+). The catalysed reaction is (8S)-3',8-cyclo-7,8-dihydroguanosine 5'-triphosphate = cyclic pyranopterin phosphate + diphosphate. It participates in cofactor biosynthesis; molybdopterin biosynthesis. Isoform Mocs1a and isoform Mocs1b probably form a complex that catalyzes the conversion of 5'-GTP to cyclic pyranopterin monophosphate (cPMP). Mocs1a catalyzes the cyclization of GTP to (8S)-3',8-cyclo-7,8-dihydroguanosine 5'-triphosphate and Mocs1b catalyzes the subsequent conversion of (8S)-3',8-cyclo-7,8-dihydroguanosine 5'-triphosphate to cPMP. This Mus musculus (Mouse) protein is Molybdenum cofactor biosynthesis protein 1 (Mocs1).